Consider the following 282-residue polypeptide: Polyamine aminopropyltransferase (282 aa).

Residues 11–239 (IEWYPRGYGV…SPWSFLVGVK (229 aa)) enclose the PABS domain. Glutamine 36 contacts S-methyl-5'-thioadenosine. Spermidine is bound by residues histidine 67 and aspartate 91. Residues glutamate 111 and 142–143 (DG) contribute to the S-methyl-5'-thioadenosine site. Aspartate 160 acts as the Proton acceptor in catalysis. 160–163 (DSTD) provides a ligand contact to spermidine. Proline 167 contributes to the S-methyl-5'-thioadenosine binding site.

The protein belongs to the spermidine/spermine synthase family. Homodimer or homotetramer.

The protein resides in the cytoplasm. The catalysed reaction is S-adenosyl 3-(methylsulfanyl)propylamine + putrescine = S-methyl-5'-thioadenosine + spermidine + H(+). The protein operates within amine and polyamine biosynthesis; spermidine biosynthesis; spermidine from putrescine: step 1/1. In terms of biological role, catalyzes the irreversible transfer of a propylamine group from the amino donor S-adenosylmethioninamine (decarboxy-AdoMet) to putrescine (1,4-diaminobutane) to yield spermidine. The polypeptide is Polyamine aminopropyltransferase (Thermococcus onnurineus (strain NA1)).